The sequence spans 24 residues: DYE-linked aldehyde dehydrogenase, alpha chain (24 aa).

As to quaternary structure, heterotetramer composed of an alpha, a beta and two gamma chains. Requires Mo-molybdopterin cytosine dinucleotide as cofactor.

Its function is as follows. Active with aldehydes and formate esters as substrates. The sequence is that of DYE-linked aldehyde dehydrogenase, alpha chain from Amycolatopsis methanolica.